Reading from the N-terminus, the 685-residue chain is Probable transcriptional regulator SLK3 (685 aa).

2 disordered regions span residues 25–66 (NLPG…ENSY) and 108–129 (LQQQ…SQRL). The span at 39–56 (QHLPQQQQRQLLEQQAGQ) shows a compositional bias: low complexity. A dimerization region spans residues 176–423 (PAENCITYWR…EHKVGPLEGL (248 aa)). The short motif at 185–199 (RKFVAEYFSPRAKQR) is the Nuclear localization signal element. Over residues 447–459 (GNSGAMSGPAQAQ) the composition is skewed to polar residues. Disordered stretches follow at residues 447-491 (GNSG…MNGS), 512-591 (NNQN…NTQE), and 611-658 (QQQA…NNLP). Residues 460–471 (MTLSSGTMSGST) show a composition bias toward low complexity. The span at 512-524 (NNQNSNTGNQEGF) shows a compositional bias: polar residues. Low complexity predominate over residues 525–543 (SSQNPTLNSNQSPSSSSQQ). Polar residues-rich tracts occupy residues 544 to 588 (RENL…SHGN), 611 to 636 (QQQA…TSNI), and 645 to 658 (RINS…NNLP).

The protein belongs to the adn1/SEU family.

It localises to the nucleus. Functionally, probable transcription regulator that functions in the development of the carpel margin meristem similarly to SEUSS (SEU). In association with SEU, supports organ development from meristematic regions by facilitating auxin response and thus organ initiation, and by sustaining meristematic potential through the maintenance of PHABULOSA expression. This is Probable transcriptional regulator SLK3 (SLK3) from Arabidopsis thaliana (Mouse-ear cress).